The sequence spans 361 residues: Phosphate acyltransferase (361 aa).

The protein belongs to the PlsX family. In terms of assembly, homodimer. Probably interacts with PlsY.

It localises to the cytoplasm. It catalyses the reaction a fatty acyl-[ACP] + phosphate = an acyl phosphate + holo-[ACP]. Its pathway is lipid metabolism; phospholipid metabolism. Its function is as follows. Catalyzes the reversible formation of acyl-phosphate (acyl-PO(4)) from acyl-[acyl-carrier-protein] (acyl-ACP). This enzyme utilizes acyl-ACP as fatty acyl donor, but not acyl-CoA. The protein is Phosphate acyltransferase of Parvibaculum lavamentivorans (strain DS-1 / DSM 13023 / NCIMB 13966).